The following is a 455-amino-acid chain: MLSRSRCVSRAFSRSLSAFQKGNCPLGRRSLPGISLCQGPGYPDSRKIVISNSSVLNVRFFRTTAVCKDDVITVKTPAFAESVTEGDVRWEKAVGDTVAEDEVVCEIETDKTSVQVPSPANGVIEALLVPDGGKVEGGTPLFTLRKTGAAPAKAKPAEAPAAAAPKAEPAVSAVPPPPAASIPTQMPPVPSPPQPLTSKPVSAVKPTAAPPVAEPGAVKGLRAEHREKMNRMRQRIAQRLKEAQNTCAMLTTFNEIDMSNIQDMRARHKEAFLKKHNLKLGFMSAFVKASAFALQEQPVVNAVIDDTTKEVVYRDYIDISVAVATPRGLVVPVIRNVETMNYADIERTISELGEKARKNELAIEDMDGGTFTISNGGVFGSLFGTPIINPPQSAILGMHAIVDRPVAVGGKVEIRPMMYVALTYDHRLIDGREAVTFLRKIKAAVEDPRVLLLDL.

A mitochondrion-targeting transit peptide spans 1-68; that stretch reads MLSRSRCVSR…RFFRTTAVCK (68 aa). The 75-residue stretch at 71–145 folds into the Lipoyl-binding domain; the sequence is VITVKTPAFA…EGGTPLFTLR (75 aa). The residue at position 82 (Ser82) is a Phosphoserine. N6-lipoyllysine is present on Lys111. Residues 153–173 are compositionally biased toward low complexity; that stretch reads KAKPAEAPAAAAPKAEPAVSA. Positions 153-214 are disordered; that stretch reads KAKPAEAPAA…KPTAAPPVAE (62 aa). Lys155 is subject to N6-acetyllysine. Pro residues predominate over residues 174–195; the sequence is VPPPPAASIPTQMPPVPSPPQP. Residues 221-453 are catalytic; sequence LRAEHREKMN…AVEDPRVLLL (233 aa). N6-acetyllysine is present on residues Lys269, Lys274, Lys275, Lys279, and Lys309. Residues His426 and Asp430 contribute to the active site.

The protein belongs to the 2-oxoacid dehydrogenase family. In terms of assembly, the 2-oxoglutarate dehydrogenase complex is composed of OGDH (2-oxoglutarate dehydrogenase; E1), DLST (dihydrolipoamide succinyltransferase; E2), DLD (dihydrolipoamide dehydrogenase; E3) and the assembly factor KGD4. It contains multiple copies of the three enzymatic components (E1, E2 and E3). In the nucleus, the 2-oxoglutarate dehydrogenase complex associates with KAT2A. Interacts with ABHD11; this interaction maintains the functional lipoylation of the 2-oxoglutarate dehydrogenase complex. (R)-lipoate serves as cofactor.

It localises to the mitochondrion matrix. Its subcellular location is the nucleus. It catalyses the reaction N(6)-[(R)-dihydrolipoyl]-L-lysyl-[protein] + succinyl-CoA = N(6)-[(R)-S(8)-succinyldihydrolipoyl]-L-lysyl-[protein] + CoA. Its pathway is amino-acid degradation; L-lysine degradation via saccharopine pathway; glutaryl-CoA from L-lysine: step 6/6. It participates in carbohydrate metabolism; tricarboxylic acid cycle. In terms of biological role, dihydrolipoamide succinyltransferase (E2) component of the 2-oxoglutarate dehydrogenase complex. The 2-oxoglutarate dehydrogenase complex catalyzes the overall conversion of 2-oxoglutarate to succinyl-CoA and CO(2). The 2-oxoglutarate dehydrogenase complex is mainly active in the mitochondrion. A fraction of the 2-oxoglutarate dehydrogenase complex also localizes in the nucleus and is required for lysine succinylation of histones: associates with KAT2A on chromatin and provides succinyl-CoA to histone succinyltransferase KAT2A. This Sus scrofa (Pig) protein is Dihydrolipoyllysine-residue succinyltransferase component of 2-oxoglutarate dehydrogenase complex, mitochondrial.